A 353-amino-acid polypeptide reads, in one-letter code: Photosystem II D2 protein (353 aa).

Threonine 2 is modified (N-acetylthreonine). At threonine 2 the chain carries Phosphothreonine. The helical transmembrane segment at 41 to 61 threads the bilayer; it reads CAYFALGGWFTGTTFVTSWYT. Histidine 118 contacts chlorophyll a. A helical membrane pass occupies residues 125–141; it reads GFMLRQFELARSVQLRP. Pheophytin a contacts are provided by glutamine 130 and asparagine 143. A helical transmembrane segment spans residues 153 to 166; the sequence is VFVSVFLIYPLGQS. Position 198 (histidine 198) interacts with chlorophyll a. A helical transmembrane segment spans residues 208–228; the sequence is AALLCAIHGATVENTLFEDGD. The a plastoquinone site is built by histidine 215 and phenylalanine 262. Position 215 (histidine 215) interacts with Fe cation. Histidine 269 is a Fe cation binding site. The helical transmembrane segment at 279-295 threads the bilayer; sequence GLWMSALGVVGLALNLR.

It belongs to the reaction center PufL/M/PsbA/D family. PSII is composed of 1 copy each of membrane proteins PsbA, PsbB, PsbC, PsbD, PsbE, PsbF, PsbH, PsbI, PsbJ, PsbK, PsbL, PsbM, PsbT, PsbX, PsbY, PsbZ, Psb30/Ycf12, at least 3 peripheral proteins of the oxygen-evolving complex and a large number of cofactors. It forms dimeric complexes. Interacts with PAM68. The cofactor is The D1/D2 heterodimer binds P680, chlorophylls that are the primary electron donor of PSII, and subsequent electron acceptors. It shares a non-heme iron and each subunit binds pheophytin, quinone, additional chlorophylls, carotenoids and lipids. There is also a Cl(-1) ion associated with D1 and D2, which is required for oxygen evolution. The PSII complex binds additional chlorophylls, carotenoids and specific lipids.. Post-translationally, phosphorylation occurs in normal plant growth light conditions. Rapid dephosphorylation occurs during heat shock.

The protein resides in the plastid. Its subcellular location is the chloroplast thylakoid membrane. It catalyses the reaction 2 a plastoquinone + 4 hnu + 2 H2O = 2 a plastoquinol + O2. In terms of biological role, photosystem II (PSII) is a light-driven water:plastoquinone oxidoreductase that uses light energy to abstract electrons from H(2)O, generating O(2) and a proton gradient subsequently used for ATP formation. It consists of a core antenna complex that captures photons, and an electron transfer chain that converts photonic excitation into a charge separation. The D1/D2 (PsbA/PsbD) reaction center heterodimer binds P680, the primary electron donor of PSII as well as several subsequent electron acceptors. D2 is needed for assembly of a stable PSII complex. The polypeptide is Photosystem II D2 protein (Arabidopsis thaliana (Mouse-ear cress)).